The following is a 226-amino-acid chain: Choline transport system permease protein OpuBD (226 aa).

Residues 22-202 enclose the ABC transmembrane type-1 domain; the sequence is FGRHFLMSAY…VMAVGADLLM (181 aa). A run of 5 helical transmembrane segments spans residues 27 to 47, 52 to 72, 73 to 93, 148 to 168, and 182 to 202; these read LMSA…GILI, RLSA…ALAM, LAVL…SLFL, ALVI…GGLG, and AIIL…DLLM.

Belongs to the binding-protein-dependent transport system permease family. CysTW subfamily.

It localises to the cell membrane. Involved in a high affinity multicomponent binding-protein-dependent transport system for choline; probably responsible for the translocation of the substrate across the membrane. The chain is Choline transport system permease protein OpuBD (opuBD) from Bacillus subtilis (strain 168).